The primary structure comprises 1003 residues: Trifunctional purine biosynthetic protein adenosine-3 (1003 aa).

An ATP-grasp domain is found at 111–318 (KSFLDRHGIP…LYEVMQAVIN (208 aa)). ATP-binding positions include 190 to 193 (EELL), glutamate 197, arginine 220, and asparagine 229. Residues 214-235 (PAQDHKRLKDGDEGPNTGGMGA) form a disordered region. Residues 216–225 (QDHKRLKDGD) are compositionally biased toward basic and acidic residues. Positions 288 and 290 each coordinate Mg(2+). The interval 434-805 (GLTYKNSGVD…QGKIQTNKVK (372 aa)) is AIRS domain. The segment at 806-1003 (VAVLISGTGT…VGEAGKICWK (198 aa)) is GART domain. N(1)-(5-phospho-beta-D-ribosyl)glycinamide is bound at residue 814-816 (GTN). Residues arginine 867, 892-895 (MRIL), and asparagine 909 contribute to the (6R)-10-formyltetrahydrofolate site. The Proton donor role is filled by histidine 911. 943 to 947 (AEEVD) provides a ligand contact to (6R)-10-formyltetrahydrofolate. N(1)-(5-phospho-beta-D-ribosyl)glycinamide is bound at residue 973–976 (KEAE).

This sequence in the N-terminal section; belongs to the GARS family. In the central section; belongs to the AIR synthase family. The protein in the C-terminal section; belongs to the GART family. In terms of assembly, homodimer. Mg(2+) serves as cofactor. It depends on Mn(2+) as a cofactor.

The enzyme catalyses 5-phospho-beta-D-ribosylamine + glycine + ATP = N(1)-(5-phospho-beta-D-ribosyl)glycinamide + ADP + phosphate + H(+). The catalysed reaction is 2-formamido-N(1)-(5-O-phospho-beta-D-ribosyl)acetamidine + ATP = 5-amino-1-(5-phospho-beta-D-ribosyl)imidazole + ADP + phosphate + H(+). It catalyses the reaction N(1)-(5-phospho-beta-D-ribosyl)glycinamide + (6R)-10-formyltetrahydrofolate = N(2)-formyl-N(1)-(5-phospho-beta-D-ribosyl)glycinamide + (6S)-5,6,7,8-tetrahydrofolate + H(+). It participates in purine metabolism; IMP biosynthesis via de novo pathway; 5-amino-1-(5-phospho-D-ribosyl)imidazole from N(2)-formyl-N(1)-(5-phospho-D-ribosyl)glycinamide: step 2/2. It functions in the pathway purine metabolism; IMP biosynthesis via de novo pathway; N(1)-(5-phospho-D-ribosyl)glycinamide from 5-phospho-alpha-D-ribose 1-diphosphate: step 2/2. Its pathway is purine metabolism; IMP biosynthesis via de novo pathway; N(2)-formyl-N(1)-(5-phospho-D-ribosyl)glycinamide from N(1)-(5-phospho-D-ribosyl)glycinamide (10-formyl THF route): step 1/1. In terms of biological role, trifunctional enzyme that catalyzes three distinct reactions as part of the 'de novo' inosine monophosphate biosynthetic pathway. This Gallus gallus (Chicken) protein is Trifunctional purine biosynthetic protein adenosine-3 (GART).